Reading from the N-terminus, the 236-residue chain is Small ribosomal subunit protein uS2c (236 aa).

It belongs to the universal ribosomal protein uS2 family.

Its subcellular location is the plastid. It is found in the chloroplast. This is Small ribosomal subunit protein uS2c (rps2) from Ceratophyllum demersum (Rigid hornwort).